The chain runs to 125 residues: Probable endoribonuclease HigB1 (125 aa).

It belongs to the mycobacterial HigB family.

In terms of biological role, toxic component of an atypical, type II toxin-antitoxin chaperone (TAC) system. Probably an endoribonuclease, neutralized by its cognate antitoxin HigA which also requires SecB-like chaperone MT2006 (AC Q7D7P7). In Mycobacterium tuberculosis (strain CDC 1551 / Oshkosh), this protein is Probable endoribonuclease HigB1.